Here is a 499-residue protein sequence, read N- to C-terminus: Glycerol kinase (499 aa).

Thr-13 lines the ADP pocket. Residues Thr-13, Thr-14, and Ser-15 each coordinate ATP. Thr-13 contributes to the sn-glycerol 3-phosphate binding site. Arg-17 contributes to the ADP binding site. Residues Arg-83, Glu-84, Tyr-136, and Asp-246 each contribute to the sn-glycerol 3-phosphate site. Residues Arg-83, Glu-84, Tyr-136, Asp-246, and Gln-247 each coordinate glycerol. ADP-binding residues include Thr-268 and Gly-311. ATP-binding residues include Thr-268, Gly-311, Gln-315, and Gly-412. 2 residues coordinate ADP: Gly-412 and Asn-416.

The protein belongs to the FGGY kinase family.

It carries out the reaction glycerol + ATP = sn-glycerol 3-phosphate + ADP + H(+). The protein operates within polyol metabolism; glycerol degradation via glycerol kinase pathway; sn-glycerol 3-phosphate from glycerol: step 1/1. Inhibited by fructose 1,6-bisphosphate (FBP). In terms of biological role, key enzyme in the regulation of glycerol uptake and metabolism. Catalyzes the phosphorylation of glycerol to yield sn-glycerol 3-phosphate. In Francisella philomiragia subsp. philomiragia (strain ATCC 25017 / CCUG 19701 / FSC 153 / O#319-036), this protein is Glycerol kinase.